A 572-amino-acid polypeptide reads, in one-letter code: 2-succinyl-5-enolpyruvyl-6-hydroxy-3-cyclohexene-1-carboxylate synthase (572 aa).

This sequence belongs to the TPP enzyme family. MenD subfamily. As to quaternary structure, homodimer. It depends on Mg(2+) as a cofactor. Mn(2+) serves as cofactor. Requires thiamine diphosphate as cofactor.

The enzyme catalyses isochorismate + 2-oxoglutarate + H(+) = 5-enolpyruvoyl-6-hydroxy-2-succinyl-cyclohex-3-ene-1-carboxylate + CO2. Its pathway is quinol/quinone metabolism; 1,4-dihydroxy-2-naphthoate biosynthesis; 1,4-dihydroxy-2-naphthoate from chorismate: step 2/7. The protein operates within quinol/quinone metabolism; menaquinone biosynthesis. Its function is as follows. Catalyzes the thiamine diphosphate-dependent decarboxylation of 2-oxoglutarate and the subsequent addition of the resulting succinic semialdehyde-thiamine pyrophosphate anion to isochorismate to yield 2-succinyl-5-enolpyruvyl-6-hydroxy-3-cyclohexene-1-carboxylate (SEPHCHC). The polypeptide is 2-succinyl-5-enolpyruvyl-6-hydroxy-3-cyclohexene-1-carboxylate synthase (Aeromonas salmonicida (strain A449)).